The chain runs to 474 residues: Iroquois-class homeodomain protein IRX-2 (474 aa).

Positions 115 to 177 (DPAYRKNATR…NARRRLKKEN (63 aa)) form a DNA-binding region, homeobox; TALE-type. Disordered stretches follow at residues 177–220 (NKMT…EDEG), 262–373 (EDLE…PGGS), and 420–461 (PGET…DTSE). At S187 the chain carries Phosphoserine. The span at 196 to 210 (DASRSKEESSDKAQD) shows a compositional bias: basic and acidic residues. The segment covering 262–275 (EDLEDEEDEEDECE) has biased composition (acidic residues). Composition is skewed to low complexity over residues 293–305 (EAPL…EAAP) and 358–373 (PAAA…PGGS).

This sequence belongs to the TALE/IRO homeobox family. Expressed in specific and overlapping patterns with Irx1 and Irx3 in the developing and adult metanephric kidney. In the adult metanephros, renal expression is found in the loop of Henle in the S3 proximal tubule segment and in the thick ascending limb (TAL) of the distal tubule.

The protein localises to the nucleus. The polypeptide is Iroquois-class homeodomain protein IRX-2 (Irx2) (Mus musculus (Mouse)).